The following is a 54-amino-acid chain: uncharacterized protein (54 aa).

Basic and acidic residues-rich tracts occupy residues 1-19 and 26-54; these read MTEK…HNDL and EELK…YDTK. Residues 1–54 are disordered; that stretch reads MTEKKQQNKPNENPEHNDLTDPIPNEELKENMNDEKHKRQQRDNSQSERDYDTK.

This is an uncharacterized protein from Bacillus subtilis (strain 168).